The following is a 111-amino-acid chain: Thioredoxin 2 (111 aa).

In terms of domain architecture, Thioredoxin spans 2 to 109 (SKGVITITDA…LLSFLDTHLN (108 aa)). Cysteines 33 and 36 form a disulfide.

The protein belongs to the thioredoxin family.

In terms of biological role, participates in various redox reactions through the reversible oxidation of its active center dithiol to a disulfide and catalyzes dithiol-disulfide exchange reactions. The polypeptide is Thioredoxin 2 (trxB) (Nostoc sp. (strain PCC 7120 / SAG 25.82 / UTEX 2576)).